The following is a 310-amino-acid chain: Ribosomal RNA small subunit methyltransferase H (310 aa).

Residues 33 to 35 (AGH), Asp53, Phe79, Asp100, and Gln107 contribute to the S-adenosyl-L-methionine site.

Belongs to the methyltransferase superfamily. RsmH family.

It localises to the cytoplasm. The enzyme catalyses cytidine(1402) in 16S rRNA + S-adenosyl-L-methionine = N(4)-methylcytidine(1402) in 16S rRNA + S-adenosyl-L-homocysteine + H(+). Its function is as follows. Specifically methylates the N4 position of cytidine in position 1402 (C1402) of 16S rRNA. This Clostridium botulinum (strain Eklund 17B / Type B) protein is Ribosomal RNA small subunit methyltransferase H.